The following is a 413-amino-acid chain: Methylaspartate ammonia-lyase (413 aa).

Gln172 provides a ligand contact to (2S,3S)-3-methyl-L-aspartate. 3 residues coordinate Mg(2+): Asp238, Glu273, and Asp307. (2S,3S)-3-methyl-L-aspartate is bound at residue Gln329. The Proton acceptor role is filled by Lys331. (2S,3S)-3-methyl-L-aspartate is bound at residue Thr360–Cys361.

It belongs to the methylaspartate ammonia-lyase family. As to quaternary structure, homodimer. It depends on Mg(2+) as a cofactor.

It catalyses the reaction (2S,3S)-3-methyl-L-aspartate = mesaconate + NH4(+). Its pathway is amino-acid degradation; L-glutamate degradation via mesaconate pathway; acetate and pyruvate from L-glutamate: step 2/4. Involved in the methylaspartate cycle. Catalyzes the formation of the alpha,beta-unsaturated bond by the reversible anti elimination of ammonia from L-threo-beta-methylaspartate (L-threo-(2S,3S)-3-methylaspartate) to give mesaconate. This is Methylaspartate ammonia-lyase from Citrobacter amalonaticus.